We begin with the raw amino-acid sequence, 557 residues long: Potassium-transporting ATPase potassium-binding subunit (557 aa).

12 consecutive transmembrane segments (helical) span residues 5 to 25, 63 to 83, 132 to 152, 170 to 190, 253 to 273, 283 to 303, 329 to 349, 356 to 376, 379 to 399, 416 to 436, 484 to 504, and 526 to 546; these read GFLL…PLGS, LSAI…MLLG, GLTV…FALI, LLRI…LFFI, FVQM…FGEV, LLWA…WAEV, VLVS…AVIA, ALGG…FGGV, GLYG…LMIG, LTAL…ALAM, LLAL…MAIA, and LFVG…FIPA.

The protein belongs to the KdpA family. The system is composed of three essential subunits: KdpA, KdpB and KdpC.

It localises to the cell inner membrane. Part of the high-affinity ATP-driven potassium transport (or Kdp) system, which catalyzes the hydrolysis of ATP coupled with the electrogenic transport of potassium into the cytoplasm. This subunit binds the periplasmic potassium ions and delivers the ions to the membrane domain of KdpB through an intramembrane tunnel. The protein is Potassium-transporting ATPase potassium-binding subunit of Escherichia coli O127:H6 (strain E2348/69 / EPEC).